The following is a 105-amino-acid chain: MFRFVCVLFIALVVFCTTTSAGELVCNRPNEEYRCGSACQTTCATLGQRCPIMNIRCNDACYCKEGYARYGDDTGMCVSISQCNSKRSAIAQILRSKQLSKNSGV.

The N-terminal stretch at 1-21 (MFRFVCVLFIALVVFCTTTSA) is a signal peptide. 5 disulfides stabilise this stretch: C26–C61, C35–C57, C39–C50, C43–C83, and C63–C77. Residues 26–83 (CNRPNEEYRCGSACQTTCATLGQRCPIMNIRCNDACYCKEGYARYGDDTGMCVSISQC) enclose the TIL domain.

This sequence belongs to the serine protease inhibitor-like (TIL domain-containing) family. Expressed by the venom gland.

The protein localises to the secreted. In terms of biological role, inhibits metalloprotease (human MMP3), trypsin, chymotrypsin, plasmin and microbial serine protease (proteinase K). Exhibits antifibrinolytic activity by binding plasmin and inhibiting it. Does not inhibit elastase, thrombin or microbial serine protease (subtilisin A). The protein is Venom metalloprotease inhibitor of Bombus ignitus (Bumblebee).